Consider the following 567-residue polypeptide: Potassium-transporting ATPase potassium-binding subunit (567 aa).

Transmembrane regions (helical) follow at residues Gly5–Gly25, Thr64–Leu84, Gly136–Ile156, Leu179–Pro199, Ile254–Phe274, Trp285–Ala305, Val328–Val350, Ile375–Phe395, Met421–Leu441, Ile459–Thr481, Ile486–Ile506, and Leu529–Ala549.

It belongs to the KdpA family. In terms of assembly, the system is composed of three essential subunits: KdpA, KdpB and KdpC.

The protein resides in the cell inner membrane. In terms of biological role, part of the high-affinity ATP-driven potassium transport (or Kdp) system, which catalyzes the hydrolysis of ATP coupled with the electrogenic transport of potassium into the cytoplasm. This subunit binds the periplasmic potassium ions and delivers the ions to the membrane domain of KdpB through an intramembrane tunnel. This Rhizobium rhizogenes (strain K84 / ATCC BAA-868) (Agrobacterium radiobacter) protein is Potassium-transporting ATPase potassium-binding subunit.